A 170-amino-acid chain; its full sequence is dCTP pyrophosphatase 1 (170 aa).

Residues 1–25 (MSQAGTGVCGNGGQEDSAAAGPFSF) form a disordered region. At Ser-2 the chain carries N-acetylserine. Ser-2 is subject to Phosphoserine. Residues His-38 and 47-51 (WEQFH) each bind substrate. Mg(2+) is bound by residues Glu-63 and Glu-66. Trp-73 is a binding site for substrate. The Mg(2+) site is built by Glu-95 and Asp-98. Tyr-102 is a substrate binding site. Residues 149 to 170 (LSENEAVGSGDPASELGNQAST) form a disordered region.

As to quaternary structure, homotetramer. The cofactor is Mg(2+).

The protein resides in the cytoplasm. The protein localises to the cytosol. The catalysed reaction is dCTP + H2O = dCMP + diphosphate + H(+). Functionally, hydrolyzes deoxynucleoside triphosphates (dNTPs) to the corresponding nucleoside monophosphates. Has a strong preference for dCTP and its analogs including 5-iodo-dCTP and 5-methyl-dCTP for which it may even have a higher efficiency. May protect DNA or RNA against the incorporation of these genotoxic nucleotide analogs through their catabolism. The chain is dCTP pyrophosphatase 1 from Rattus norvegicus (Rat).